The primary structure comprises 512 residues: Plastidal glycolate/glycerate translocator 1, chloroplastic (512 aa).

The N-terminal 76 residues, 1–76 (MATLLATPIF…MNFERKLSVQ (76 aa)), are a transit peptide targeting the chloroplast. Residue Ala-77 is modified to N-acetylalanine. A run of 12 helical transmembrane segments spans residues 93–113 (VIAISHLLVSLGIILAADYFL), 127–147 (ALFGMFCIFSVLMIFDSVVPA), 160–180 (FLFIQRWLPLFYVPSLVVLPL), 195–215 (YIVAGGWLASLCVAGYTAIAV), 238–258 (LELWSWSGIFVVSFVGALFYP), 270–290 (PFLLSSTVLGYIVGSGLPSSI), 293–313 (VFHPIICCALSAVLAALAFGY), 336–356 (AGDILMGFLGSVILSFAFSMF), 367–387 (AEIFTSVIVSTVFSLYSTALV), 398–418 (TVSILPRCITVALALSIVSLF), 425–445 (LTAAVVVVTGLIGANFVQVVL), and 480–500 (LPFCAIAYALTGIFGSLLCSV).

Belongs to the CidB/LrgB family. In terms of tissue distribution, expressed in leaves, stems and flowers, but not in roots.

The protein localises to the plastid. It is found in the chloroplast membrane. In terms of biological role, glycolate/glycerate transporter required for photorespiration. In Arabidopsis thaliana (Mouse-ear cress), this protein is Plastidal glycolate/glycerate translocator 1, chloroplastic (PLGG1).